A 164-amino-acid chain; its full sequence is Photosystem II extrinsic protein V (164 aa).

Residues 1 to 27 (MIPNRKIQLSLFAVIIVFETLLNQVYA) form the signal peptide. Heme c is bound by residues C64, C67, H68, and M131.

It belongs to the cytochrome c family. PsbV subfamily. PSII is composed of 1 copy each of membrane proteins PsbA, PsbB, PsbC, PsbD, PsbE, PsbF, PsbH, PsbI, PsbJ, PsbK, PsbL, PsbM, PsbT, PsbY, PsbZ, Psb30/Ycf12, at least 3 peripheral proteins of the oxygen-evolving complex and a large number of cofactors. It forms dimeric complexes. The extrinsic subunits in red algae are PsbO (OEC33), PsbQ', cytochrome c-550 and PsbU. Requires heme c as cofactor.

It is found in the plastid. It localises to the chloroplast thylakoid membrane. One of the extrinsic, lumenal subunits of photosystem II (PSII). PSII is a light-driven water plastoquinone oxidoreductase, using light energy to abstract electrons from H(2)O, generating a proton gradient subsequently used for ATP formation. The extrinsic proteins stabilize the structure of photosystem II oxygen-evolving complex (OEC), the ion environment of oxygen evolution and protect the OEC against heat-induced inactivation. This Gracilaria tenuistipitata var. liui (Red alga) protein is Photosystem II extrinsic protein V.